The chain runs to 356 residues: MSIANLARRVVRALTPYQSARRIGGKGHVWLNANEAPLAYPFTIEGGRLNRYPECQPAEVVNGYAAYAGVNPDQVLVSRGADEAIELLIRTFCEAGEDQILICPPTYGMYAISAETCGVGIVEQPLTTSRQPDWPAIADRLSDVKLVFLCSPNNPTGDLVGRDGLIALLEKARDRAIVVVDEAYIEFCPEASVVDLLARFPNLVVTRTLSKAFALAGIRCGFTLASPEVIAMLAKVIAPYPIPEPIAQIAAQALSPMGLELMQERVVELNKQKAAFKAALATLHCVKEVFEDKGNFVLVRFVDGAAVFAAMKAAGIILRDFSTKPGLDNSIRVTIGYQGEMDAVLAVLRDLPSPSF.

Lysine 211 is subject to N6-(pyridoxal phosphate)lysine.

The protein belongs to the class-II pyridoxal-phosphate-dependent aminotransferase family. Histidinol-phosphate aminotransferase subfamily. In terms of assembly, homodimer. It depends on pyridoxal 5'-phosphate as a cofactor.

The catalysed reaction is L-histidinol phosphate + 2-oxoglutarate = 3-(imidazol-4-yl)-2-oxopropyl phosphate + L-glutamate. Its pathway is amino-acid biosynthesis; L-histidine biosynthesis; L-histidine from 5-phospho-alpha-D-ribose 1-diphosphate: step 7/9. The sequence is that of Histidinol-phosphate aminotransferase from Aeromonas hydrophila subsp. hydrophila (strain ATCC 7966 / DSM 30187 / BCRC 13018 / CCUG 14551 / JCM 1027 / KCTC 2358 / NCIMB 9240 / NCTC 8049).